We begin with the raw amino-acid sequence, 571 residues long: Proline--tRNA ligase (571 aa).

The protein belongs to the class-II aminoacyl-tRNA synthetase family. ProS type 1 subfamily. As to quaternary structure, homodimer.

It is found in the cytoplasm. It carries out the reaction tRNA(Pro) + L-proline + ATP = L-prolyl-tRNA(Pro) + AMP + diphosphate. Catalyzes the attachment of proline to tRNA(Pro) in a two-step reaction: proline is first activated by ATP to form Pro-AMP and then transferred to the acceptor end of tRNA(Pro). As ProRS can inadvertently accommodate and process non-cognate amino acids such as alanine and cysteine, to avoid such errors it has two additional distinct editing activities against alanine. One activity is designated as 'pretransfer' editing and involves the tRNA(Pro)-independent hydrolysis of activated Ala-AMP. The other activity is designated 'posttransfer' editing and involves deacylation of mischarged Ala-tRNA(Pro). The misacylated Cys-tRNA(Pro) is not edited by ProRS. This is Proline--tRNA ligase from Shewanella sp. (strain W3-18-1).